Reading from the N-terminus, the 754-residue chain is Fibronectin type III domain-containing protein 1 (754 aa).

An N-terminal signal peptide occupies residues 1–19 (MKSWISISFLCMLFPLSNG). 3 disordered regions span residues 40–61 (SLQG…SQGG), 85–106 (AQIS…TQFS), and 130–163 (AQHS…AQSG). Residues 130 to 161 (AQHSQAGAQGSQFPQSAAHTAQHHQGTAQPAQ) are compositionally biased toward low complexity. 5 consecutive Fibronectin type-III domains span residues 250–355 (PPQS…TPDL), 359–449 (APLN…TDKF), 453–545 (APRN…TKMD), 549–642 (EPMS…LPKP), and 645–742 (LVPN…SFPG). A disordered region spans residues 731 to 754 (SNLSSQQFSFPGQQVGQQQSNPWI).

As to expression, prismatic layer of shell (at protein level). Expressed primarily in the mantle with highest level in the outer epithelium of the mantle edge and lower level in the mantle pallium.

The protein resides in the secreted. The chain is Fibronectin type III domain-containing protein 1 from Margaritifera margaritifera (Freshwater pearl mussel).